The chain runs to 337 residues: F420-dependent glucose-6-phosphate dehydrogenase 2 (337 aa).

Coenzyme F420-(gamma-Glu)n is bound at residue Asp40. His41 functions as the Proton donor in the catalytic mechanism. Residues Thr77 and 108–109 each bind coenzyme F420-(gamma-Glu)n; that span reads TG. Glu110 (proton acceptor) is an active-site residue. Residues Asn113, 178-179, and 181-182 contribute to the coenzyme F420-(gamma-Glu)n site; these read GG and VV. Substrate-binding residues include Thr196, Lys199, Lys260, and Arg284.

The protein belongs to the F420-dependent glucose-6-phosphate dehydrogenase family. In terms of assembly, homodimer.

The catalysed reaction is oxidized coenzyme F420-(gamma-L-Glu)(n) + D-glucose 6-phosphate + H(+) = 6-phospho-D-glucono-1,5-lactone + reduced coenzyme F420-(gamma-L-Glu)(n). In terms of biological role, catalyzes the coenzyme F420-dependent oxidation of glucose 6-phosphate (G6P) to 6-phosphogluconolactone. This is F420-dependent glucose-6-phosphate dehydrogenase 2 from Rhodococcus jostii (strain RHA1).